The following is a 208-amino-acid chain: Phosphoribosyl-dephospho-CoA transferase (208 aa).

Residues Asp-133 and Asp-135 contribute to the active site.

The protein belongs to the MdcG family.

It catalyses the reaction apo-[malonate decarboxylase ACP] + 2'-(5''-triphospho-alpha-D-ribosyl)-3'-dephospho-CoA = holo-[malonate decarboxylase ACP] + diphosphate. Its function is as follows. Transfers 2'-(5-triphosphoribosyl)-3'-dephosphocoenzyme-A to the apo-[acyl-carrier-protein] of the malonate decarboxylase to yield holo-[acyl-carrier-protein]. This is Phosphoribosyl-dephospho-CoA transferase from Pseudomonas fluorescens (strain ATCC BAA-477 / NRRL B-23932 / Pf-5).